Reading from the N-terminus, the 769-residue chain is Intron Large complex component GCFC2 (769 aa).

Disordered stretches follow at residues 1–122 and 134–212; these read MALR…PIVE and RKRE…DENQ. 4 positions are modified to phosphoserine: S16, S17, S19, and S85. Residue T86 is modified to Phosphothreonine. Phosphoserine occurs at positions 118 and 169. Over residues 190–201 the composition is skewed to basic and acidic residues; it reads RMAEETSIRSEE. Residues 202–212 are compositionally biased toward acidic residues; that stretch reads SSEESQEDENQ. Phosphoserine occurs at positions 203 and 206. Residues 256-308 adopt a coiled-coil conformation; that stretch reads NLEIIKKQLNNRLTLLQESHRSHQREYEKYEQDIKSSKTAIQNLESASDHAQN.

It belongs to the GCF family. Found in the Intron Large (IL) complex, a post-mRNA release spliceosomal complex containing the excised intron, U2, U5 and U6 snRNPs, and splicing factors. Interacts with TFIP11 and DHX15.

It is found in the nucleus. The protein resides in the nucleoplasm. It localises to the nucleolus. In terms of biological role, involved in pre-mRNA splicing through regulating spliceosome C complex formation. May play a role during late-stage splicing events and turnover of excised introns. The protein is Intron Large complex component GCFC2 (Gcfc2) of Mus musculus (Mouse).